We begin with the raw amino-acid sequence, 372 residues long: GDSL esterase/lipase At5g45910 (372 aa).

Residues 1–19 form the signal peptide; that stretch reads MRINMLFIVAFSFLVSVRS. Serine 37 functions as the Nucleophile in the catalytic mechanism. N-linked (GlcNAc...) asparagine glycans are attached at residues asparagine 66, asparagine 101, and asparagine 137. Active-site residues include aspartate 345 and histidine 348.

Belongs to the 'GDSL' lipolytic enzyme family.

The protein resides in the secreted. The polypeptide is GDSL esterase/lipase At5g45910 (Arabidopsis thaliana (Mouse-ear cress)).